The sequence spans 356 residues: Arginine kinase (356 aa).

N-acetylalanine is present on Ala2. The 83-residue stretch at 9–91 folds into the Phosphagen kinase N-terminal domain; that stretch reads KLEAGFKKLE…FDPIIEDYHV (83 aa). 64-68 contacts L-arginine; it reads GVGIY. One can recognise a Phosphagen kinase C-terminal domain in the interval 119-356; that stretch reads YVISTRVRCG…LELIKMEKEM (238 aa). ATP-binding positions include 122 to 126 and His185; that span reads STRVR. Glu225 lines the L-arginine pocket. Arg229 is an ATP binding site. Cys271 contacts L-arginine. Residues 280 to 284 and 309 to 314 each bind ATP; these read RASVH and RGTRGE. Glu314 is an L-arginine binding site.

This sequence belongs to the ATP:guanido phosphotransferase family.

It catalyses the reaction L-arginine + ATP = N(omega)-phospho-L-arginine + ADP + H(+). This is Arginine kinase from Penaeus monodon (Giant tiger prawn).